The sequence spans 158 residues: Small ribosomal subunit protein uS9 (158 aa).

This sequence belongs to the universal ribosomal protein uS9 family.

This Brucella canis (strain ATCC 23365 / NCTC 10854 / RM-666) protein is Small ribosomal subunit protein uS9.